Consider the following 504-residue polypeptide: Maturase K (504 aa).

Belongs to the intron maturase 2 family. MatK subfamily.

It localises to the plastid. It is found in the chloroplast. Functionally, usually encoded in the trnK tRNA gene intron. Probably assists in splicing its own and other chloroplast group II introns. This Cucumis sativus (Cucumber) protein is Maturase K.